The primary structure comprises 151 residues: Large ribosomal subunit protein uL15 (151 aa).

The disordered stretch occupies residues 1–57 (MTLRLDSLKSNKGARRRKLRKGRGIAAGQGASCGFGMRGQKSRSGRPTRPGFEGGQM). A compositionally biased stretch (basic residues) spans 12–23 (KGARRRKLRKGR). Residues 25 to 37 (IAAGQGASCGFGM) are compositionally biased toward gly residues.

Belongs to the universal ribosomal protein uL15 family. Part of the 50S ribosomal subunit.

Its function is as follows. Binds to the 23S rRNA. The sequence is that of Large ribosomal subunit protein uL15 from Synechococcus sp. (strain CC9605).